The sequence spans 498 residues: Polyamine aminopropyltransferase (498 aa).

6 helical membrane passes run 7–27, 35–55, 67–87, 97–117, 134–154, and 163–183; these read ISVL…GTIA, VTQF…GSWL, FLEI…ILYL, IPLF…IPVL, VLSL…IFFA, and GFIF…VLPL. The segment at 196 to 446 is spermidine synthase; it reads VVVLTLLILG…AGQRPIQFKK (251 aa). In terms of domain architecture, PABS spans 200 to 439; that stretch reads TLLILGFSYS…GEWGFVLAGQ (240 aa). Gln-234 serves as a coordination point for S-methyl-5'-thioadenosine. The spermidine site is built by His-264 and Asp-288. Residues Asp-308 and 342-343 each bind S-methyl-5'-thioadenosine; that span reads DA. Asp-360 serves as the catalytic Proton acceptor.

It belongs to the spermidine/spermine synthase family. Homodimer or homotetramer.

Its subcellular location is the cell membrane. The catalysed reaction is S-adenosyl 3-(methylsulfanyl)propylamine + putrescine = S-methyl-5'-thioadenosine + spermidine + H(+). The protein operates within amine and polyamine biosynthesis; spermidine biosynthesis; spermidine from putrescine: step 1/1. Catalyzes the irreversible transfer of a propylamine group from the amino donor S-adenosylmethioninamine (decarboxy-AdoMet) to putrescine (1,4-diaminobutane) to yield spermidine. This chain is Polyamine aminopropyltransferase, found in Leptospira interrogans serogroup Icterohaemorrhagiae serovar copenhageni (strain Fiocruz L1-130).